A 477-amino-acid chain; its full sequence is MLRWLRDFVLPTAACQDAEQPTRYETLFQALDRNGDGVVDIGELQEGLRNLGIPLGQDAEEKIFTTGDVNKDGKLDFEEFMKYLKDHEKKMKLAFKSLDKNNDGKIEASEIVQSLQTLGLTISEQQAELILQSIDVDGTMTVDWNEWRDYFLFNPVTDIEEIIRFWKHSTGIDIGDSLTIPDEFTEDEKKSGQWWRQLLAGGIAGAVSRTSTAPLDRLKIMMQVHGSKSDKMNIFGGFRQMVKEGGIRSLWRGNGTNVIKIAPETAVKFWAYEQYKKLLTEEGQKIGTFERFISGSMAGATAQTFIYPMEVMKTRLAVGKTGQYSGIYDCAKKILKHEGLGAFYKGYVPNLLGIIPYAGIDLAVYELLKSYWLDNFAKDSVNPGVMVLLGCGALSSTCGQLASYPLALVRTRMQAQAMLEGSPQLNMVGLFRRIISKEGIPGLYRGITPNFMKVLPAVGISYVVYENMKQTLGVTQK.

Residues Met-1 to Asp-173 are regulatory N-terminal domain. At Met-1–Gln-197 the chain is on the mitochondrial intermembrane side. EF-hand domains are found at residues Glu-19–Pro-54, Leu-55–Glu-88, Asp-86–Thr-121, and Ile-122–Thr-157. Residues Asp-32, Asn-34, Asp-36, Val-38, Glu-43, Asp-68, Asn-70, Asp-72, Lys-74, Glu-79, Asp-99, Asn-101, Asp-103, Lys-105, Glu-110, Asp-135, Asp-137, Thr-139, Thr-141, and Glu-146 each contribute to the Ca(2+) site. The interval Ile-159–His-168 is linker region. The tract at residues Ile-174 to Lys-477 is C-terminal transmembrane transporter domain. Solcar repeat units lie at residues Gly-192–Leu-278, Ile-286–Tyr-371, and Pro-383–Thr-471. The helical transmembrane segment at Leu-198–Leu-215 threads the bilayer. Topologically, residues Asp-216–Arg-252 are mitochondrial matrix. Residues Gly-253–Tyr-272 traverse the membrane as a helical segment. Topologically, residues Glu-273–Gly-295 are mitochondrial intermembrane. Residues Ser-296–Met-309 traverse the membrane as a helical segment. At Glu-310–Lys-345 the chain is on the mitochondrial matrix side. The residue at position 320 (Lys-320) is an N6-acetyllysine; alternate. Residue Lys-320 is modified to N6-succinyllysine; alternate. The residue at position 336 (Lys-336) is an N6-acetyllysine. Residues Gly-346–Tyr-365 form a helical membrane-spanning segment. Over Glu-366–Leu-388 the chain is Mitochondrial intermembrane. The helical transmembrane segment at Leu-389–Leu-406 threads the bilayer. Residues Ala-407 to Arg-445 lie on the Mitochondrial matrix side of the membrane. Residue Lys-437 is modified to N6-acetyllysine; alternate. The residue at position 437 (Lys-437) is an N6-succinyllysine; alternate. Residues Gly-446–Tyr-465 traverse the membrane as a helical segment. Residues Glu-466 to Lys-477 are Mitochondrial intermembrane-facing.

It belongs to the mitochondrial carrier (TC 2.A.29) family. As to quaternary structure, monomer. Expressed in all tissues tested. Highly expressed in testis, expressed at intermediate level in small intestine and pancreas, and weakly expressed in kidney, spleen, liver, skeletal muscle and heart.

The protein resides in the mitochondrion inner membrane. The enzyme catalyses Mg(2+)(out) + phosphate(in) + ATP(out) = Mg(2+)(in) + phosphate(out) + ATP(in). The catalysed reaction is ADP(out) + phosphate(in) + H(+)(out) = ADP(in) + phosphate(out) + H(+)(in). It catalyses the reaction AMP(out) + phosphate(in) = AMP(in) + phosphate(out). It carries out the reaction phosphate(in) + ATP(out) + 2 H(+)(out) = phosphate(out) + ATP(in) + 2 H(+)(in). The enzyme catalyses dADP(in) + ADP(out) = dADP(out) + ADP(in). The catalysed reaction is Mg(2+)(in) + ADP(out) + ATP(in) + H(+)(out) = Mg(2+)(out) + ADP(in) + ATP(out) + H(+)(in). It catalyses the reaction ADP(out) + diphosphate(in) = ADP(in) + diphosphate(out). It carries out the reaction dAMP(in) + ADP(out) + H(+)(out) = dAMP(out) + ADP(in) + H(+)(in). The enzyme catalyses 3'-AMP(in) + ADP(out) + H(+)(out) = 3'-AMP(out) + ADP(in) + H(+)(in). The catalysed reaction is dAMP(out) + phosphate(in) = dAMP(in) + phosphate(out). It catalyses the reaction 3'-AMP(out) + phosphate(in) = 3'-AMP(in) + phosphate(out). It carries out the reaction dADP(out) + phosphate(in) + H(+)(out) = dADP(in) + phosphate(out) + H(+)(in). Its activity is regulated as follows. Activated by an increase in cytosolic calcium levels that induce a conformational change of the N-terminal regulatory domain, uncapping the channel and allowing transport. Inhibited by bathophenanthroline, mersalyl, p-hydroxymercuribenzoate, bromcresol purple and tannic acid. Its function is as follows. Electroneutral antiporter that mediates the transport of adenyl nucleotides through the inner mitochondrial membrane. Originally identified as an ATP-magnesium/inorganic phosphate antiporter, it also acts as a broad specificity adenyl nucleotide antiporter. By regulating the mitochondrial matrix adenyl nucleotide pool could adapt to changing cellular energetic demands and indirectly regulate adenyl nucleotide-dependent metabolic pathways. In vitro, a low activity is also observed with guanyl and pyrimidine nucleotides. May play a role in protecting cells against oxidative stress-induced cell death, by buffering calcium levels in the mitochondrial matrix through the formation of calcium-phosphate precipitates. This chain is Mitochondrial adenyl nucleotide antiporter SLC25A24, found in Homo sapiens (Human).